Here is a 258-residue protein sequence, read N- to C-terminus: tRNA (guanine-N(7)-)-methyltransferase (258 aa).

The disordered stretch occupies residues 1–42; sequence MPETPLMRDNGPVNHADQDAPAVPEEGQTKDSKGSRLHPRVT. Positions 90, 115, 142, and 165 each coordinate S-adenosyl-L-methionine. Asp165 is an active-site residue. Residues Lys169, Asp201, and 235 to 238 contribute to the substrate site; that span reads TKFE.

The protein belongs to the class I-like SAM-binding methyltransferase superfamily. TrmB family.

The catalysed reaction is guanosine(46) in tRNA + S-adenosyl-L-methionine = N(7)-methylguanosine(46) in tRNA + S-adenosyl-L-homocysteine. The protein operates within tRNA modification; N(7)-methylguanine-tRNA biosynthesis. Its function is as follows. Catalyzes the formation of N(7)-methylguanine at position 46 (m7G46) in tRNA. In Rhodococcus jostii (strain RHA1), this protein is tRNA (guanine-N(7)-)-methyltransferase.